A 153-amino-acid chain; its full sequence is Histone H2A.Z-specific chaperone CHZ1 (153 aa).

Positions 1–29 are enriched in basic and acidic residues; sequence MSDEAKEKRELESQKESSHNKSEKSVEPK. The interval 1-153 is disordered; the sequence is MSDEAKEKRE…EDEEDDDFKE (153 aa). At S2 the chain carries N-acetylserine. Polar residues predominate over residues 56-65; that stretch reads LTKSENNGTV. 2 positions are modified to phosphoserine: S68 and S70. Positions 84-94 are enriched in acidic residues; sequence EGEEEEDDLAE. Positions 87 to 108 are important for H2A.Z-H2B binding; sequence EEEDDLAEIDTSNIITSGRRTR. Residues 110–138 are compositionally biased toward basic and acidic residues; it reads KVIDYKKTAEELDKKEPSTGSKDDVGYGE. Acidic residues predominate over residues 139–153; the sequence is KEEDDEDEEDDDFKE.

This sequence belongs to the CHZ1 family. Forms a heterotrimer with H2A.Z-H2B, stabilizing the association of the histone dimer. Also, with a lower affinity, forms a heterotrimer with H2A-H2B.

The protein localises to the nucleus. Forms a chaperone-bound H2A.Z-H2B complex that acts as a source for SWR1 complex-dependent H2A to H2A.Z histone replacement in chromatin. The sequence is that of Histone H2A.Z-specific chaperone CHZ1 (CHZ1) from Saccharomyces cerevisiae (strain ATCC 204508 / S288c) (Baker's yeast).